Here is a 146-residue protein sequence, read N- to C-terminus: Snaclec mucetin subunit beta (146 aa).

Residues 1–23 (MGRFIFVSFGLLVVFISLSGTEA) form the signal peptide. Disulfide bonds link Cys-27–Cys-38, Cys-55–Cys-144, and Cys-121–Cys-136. The C-type lectin domain maps to 34-145 (YDEHCYQVFQ…CSSKRYVVCK (112 aa)).

Belongs to the snaclec family. Dimer and tetramer of heterodimers of alpha and beta subunits ((alphabeta)(2) and (alphabeta)(4)); disulfide-linked. These two multimeric forms are found. In terms of processing, the complex is glycosylated. Expressed by the venom gland.

The protein localises to the secreted. Functionally, potent platelet activator that acts via GPIb (GP1BA/GP1BB). After activation by the toxin, the receptor is redistributed on platelet surface thanks to cytoskeletal translocation. The indirect activation of integrin alpha-IIb/beta-3 (ITGA2B/ITGB3) also induced by the toxin is downstream the cytoskeletal translocation of GPIb. The protein is Snaclec mucetin subunit beta of Protobothrops mucrosquamatus (Taiwan habu).